The chain runs to 525 residues: GMP synthase [glutamine-hydrolyzing] (525 aa).

The region spanning 9 to 207 (RILILDFGSQ…VLDICGCDAL (199 aa)) is the Glutamine amidotransferase type-1 domain. C86 serves as the catalytic Nucleophile. Active-site residues include H181 and E183. The 193-residue stretch at 208–400 (WTSAAIIEDT…LGLPYDMLYR (193 aa)) folds into the GMPS ATP-PPase domain. Residue 235–241 (SGGVDSS) coordinates ATP.

Homodimer.

The catalysed reaction is XMP + L-glutamine + ATP + H2O = GMP + L-glutamate + AMP + diphosphate + 2 H(+). Its pathway is purine metabolism; GMP biosynthesis; GMP from XMP (L-Gln route): step 1/1. Its function is as follows. Catalyzes the synthesis of GMP from XMP. The protein is GMP synthase [glutamine-hydrolyzing] of Proteus mirabilis (strain HI4320).